The following is a 704-amino-acid chain: Elongation factor G 1 (704 aa).

Positions 8–291 (ERYRNIGISA…AVIDYLPSPA (284 aa)) constitute a tr-type G domain. Residues 17-24 (AHIDAGKT), 88-92 (DTPGH), and 142-145 (NKMD) contribute to the GTP site.

It belongs to the TRAFAC class translation factor GTPase superfamily. Classic translation factor GTPase family. EF-G/EF-2 subfamily.

It localises to the cytoplasm. Functionally, catalyzes the GTP-dependent ribosomal translocation step during translation elongation. During this step, the ribosome changes from the pre-translocational (PRE) to the post-translocational (POST) state as the newly formed A-site-bound peptidyl-tRNA and P-site-bound deacylated tRNA move to the P and E sites, respectively. Catalyzes the coordinated movement of the two tRNA molecules, the mRNA and conformational changes in the ribosome. In Burkholderia mallei (strain ATCC 23344), this protein is Elongation factor G 1.